The following is a 202-amino-acid chain: FMN-dependent NADH:quinone oxidoreductase (202 aa).

FMN contacts are provided by residues serine 9, 15–17, and 94–97; these read SAS and MYNL.

The protein belongs to the azoreductase type 1 family. As to quaternary structure, homodimer. FMN is required as a cofactor.

It carries out the reaction 2 a quinone + NADH + H(+) = 2 a 1,4-benzosemiquinone + NAD(+). It catalyses the reaction N,N-dimethyl-1,4-phenylenediamine + anthranilate + 2 NAD(+) = 2-(4-dimethylaminophenyl)diazenylbenzoate + 2 NADH + 2 H(+). Its function is as follows. Quinone reductase that provides resistance to thiol-specific stress caused by electrophilic quinones. Functionally, also exhibits azoreductase activity. Catalyzes the reductive cleavage of the azo bond in aromatic azo compounds to the corresponding amines. This chain is FMN-dependent NADH:quinone oxidoreductase, found in Gluconobacter oxydans (strain 621H) (Gluconobacter suboxydans).